The primary structure comprises 347 residues: N-acetyl-gamma-glutamyl-phosphate reductase (347 aa).

Cysteine 151 is a catalytic residue.

The protein belongs to the NAGSA dehydrogenase family. Type 1 subfamily.

The protein resides in the cytoplasm. The enzyme catalyses N-acetyl-L-glutamate 5-semialdehyde + phosphate + NADP(+) = N-acetyl-L-glutamyl 5-phosphate + NADPH + H(+). Its pathway is amino-acid biosynthesis; L-arginine biosynthesis; N(2)-acetyl-L-ornithine from L-glutamate: step 3/4. Catalyzes the NADPH-dependent reduction of N-acetyl-5-glutamyl phosphate to yield N-acetyl-L-glutamate 5-semialdehyde. In Corynebacterium aurimucosum (strain ATCC 700975 / DSM 44827 / CIP 107346 / CN-1) (Corynebacterium nigricans), this protein is N-acetyl-gamma-glutamyl-phosphate reductase.